A 60-amino-acid polypeptide reads, in one-letter code: Potassium channel toxin alpha-KTx 29.3 (60 aa).

Residues Met-1–Ala-28 form the signal peptide. 3 cysteine pairs are disulfide-bonded: Cys-32/Cys-51, Cys-40/Cys-56, and Cys-44/Cys-58.

This sequence belongs to the short scorpion toxin superfamily. Potassium channel inhibitor family. Alpha-KTx 29 subfamily. Expressed by the venom gland.

The protein resides in the secreted. Functionally, weakly inhibits the Kv1.3/KCNA3 channel (1 uM of thetoxin inhibits currents by 13.2%) and Kv7.1/KCNQ1 channel (10 uM of the toxin inhibits currents by 27.7%). The polypeptide is Potassium channel toxin alpha-KTx 29.3 (Lychas mucronatus (Chinese swimming scorpion)).